The chain runs to 164 residues: Transforming protein STP (164 aa).

The tract at residues 1–41 is disordered; the sequence is MARGLGEGDPQENDESNGDPPHNTDERSDGDDGPTPYLPVT. Residues 122–135 fold into a zinc finger; the sequence is HSEHEQEGDKCTDC. A helical transmembrane segment spans residues 136-161; it reads SVTILLLLVIIVLLLIIIGLMLVIMF.

The protein localises to the membrane. Its function is as follows. Stp is required for transformation, but it is not required for replication of the virus. The T-lymphocyte is the target cell for transformation by herpesvirus saimiri. The protein is Transforming protein STP (1) of Saimiriine herpesvirus 2 (strain 11) (SaHV-2).